The primary structure comprises 350 residues: MVASSQKILVTGSAGFIGTHTVVQLLNNGFNVSIIDNFDNSVMEAVERVREVVGSNLSQNLEFTLGDLRNKDDLEKLFSKSKFDAVIHFAGLKAVGESVENPRRYFDNNLVGTINLYEVMAKHNCKKMVFSSSATVYGQPEKIPCVEDFKLQAMNPYGRTKLFLEEIARDIQKAEPEWRIVLLRYFNPVGAHESGKLGEDPRGIPNNLMPYIQQVAVGRLPELNVYGHDYPTRDGSAIRDYIHVMDLADGHIAALRKLFTSENIGCTAYNLGTGRGSSVLEMVAAFEKASGKKIALKLCPRRPGDATEVYASTAKAEKELGWKAKYGVEEMCRDQWNWAKNNPWGYSGKP.

7-38 (KILVTGSAGFIGTHTVVQLLNNGFNVSIIDNF) provides a ligand contact to NAD(+). Ser133 contributes to the substrate binding site. The active-site Proton acceptor is the Tyr157.

The protein belongs to the NAD(P)-dependent epimerase/dehydratase family. The cofactor is NAD(+).

The catalysed reaction is UDP-alpha-D-glucose = UDP-alpha-D-galactose. Its pathway is carbohydrate metabolism; galactose metabolism. The chain is UDP-glucose 4-epimerase (GALE) from Pisum sativum (Garden pea).